A 390-amino-acid polypeptide reads, in one-letter code: Queuine tRNA-ribosyltransferase (390 aa).

The Proton acceptor role is filled by aspartate 92. Substrate is bound by residues 92-96, aspartate 146, glutamine 195, and glycine 222; that span reads DSGGF. The tract at residues 253-259 is RNA binding; sequence GVGTPED. The Nucleophile role is filled by aspartate 272. The segment at 277–281 is RNA binding; important for wobble base 34 recognition; it reads TRNAR. Residues cysteine 310, cysteine 312, cysteine 315, and histidine 354 each contribute to the Zn(2+) site.

This sequence belongs to the queuine tRNA-ribosyltransferase family. Homodimer. Within each dimer, one monomer is responsible for RNA recognition and catalysis, while the other monomer binds to the replacement base PreQ1. It depends on Zn(2+) as a cofactor.

It carries out the reaction 7-aminomethyl-7-carbaguanine + guanosine(34) in tRNA = 7-aminomethyl-7-carbaguanosine(34) in tRNA + guanine. It functions in the pathway tRNA modification; tRNA-queuosine biosynthesis. In terms of biological role, catalyzes the base-exchange of a guanine (G) residue with the queuine precursor 7-aminomethyl-7-deazaguanine (PreQ1) at position 34 (anticodon wobble position) in tRNAs with GU(N) anticodons (tRNA-Asp, -Asn, -His and -Tyr). Catalysis occurs through a double-displacement mechanism. The nucleophile active site attacks the C1' of nucleotide 34 to detach the guanine base from the RNA, forming a covalent enzyme-RNA intermediate. The proton acceptor active site deprotonates the incoming PreQ1, allowing a nucleophilic attack on the C1' of the ribose to form the product. After dissociation, two additional enzymatic reactions on the tRNA convert PreQ1 to queuine (Q), resulting in the hypermodified nucleoside queuosine (7-(((4,5-cis-dihydroxy-2-cyclopenten-1-yl)amino)methyl)-7-deazaguanosine). The protein is Queuine tRNA-ribosyltransferase of Verminephrobacter eiseniae (strain EF01-2).